Consider the following 412-residue polypeptide: Putative F-box protein At3g22940 (412 aa).

Residues 1–38 enclose the F-box domain; the sequence is MPLEEILSRLPLKSTRAVRSTCKKWDSLFKNRSFISKA.

The protein is Putative F-box protein At3g22940 of Arabidopsis thaliana (Mouse-ear cress).